The sequence spans 271 residues: Formamidopyrimidine-DNA glycosylase (271 aa).

The active-site Schiff-base intermediate with DNA is P2. Residue E3 is the Proton donor of the active site. K58 functions as the Proton donor; for beta-elimination activity in the catalytic mechanism. Residues H92, R111, and R152 each coordinate DNA. The FPG-type zinc-finger motif lies at S237–R271. R261 functions as the Proton donor; for delta-elimination activity in the catalytic mechanism.

Belongs to the FPG family. As to quaternary structure, monomer. The cofactor is Zn(2+).

It carries out the reaction Hydrolysis of DNA containing ring-opened 7-methylguanine residues, releasing 2,6-diamino-4-hydroxy-5-(N-methyl)formamidopyrimidine.. The catalysed reaction is 2'-deoxyribonucleotide-(2'-deoxyribose 5'-phosphate)-2'-deoxyribonucleotide-DNA = a 3'-end 2'-deoxyribonucleotide-(2,3-dehydro-2,3-deoxyribose 5'-phosphate)-DNA + a 5'-end 5'-phospho-2'-deoxyribonucleoside-DNA + H(+). Its function is as follows. Involved in base excision repair of DNA damaged by oxidation or by mutagenic agents. Acts as a DNA glycosylase that recognizes and removes damaged bases. Has a preference for oxidized purines, such as 7,8-dihydro-8-oxoguanine (8-oxoG). Has AP (apurinic/apyrimidinic) lyase activity and introduces nicks in the DNA strand. Cleaves the DNA backbone by beta-delta elimination to generate a single-strand break at the site of the removed base with both 3'- and 5'-phosphates. This Xanthomonas euvesicatoria pv. vesicatoria (strain 85-10) (Xanthomonas campestris pv. vesicatoria) protein is Formamidopyrimidine-DNA glycosylase.